Reading from the N-terminus, the 195-residue chain is 3-isopropylmalate dehydratase small subunit (195 aa).

Belongs to the LeuD family. LeuD type 1 subfamily. In terms of assembly, heterodimer of LeuC and LeuD.

It carries out the reaction (2R,3S)-3-isopropylmalate = (2S)-2-isopropylmalate. The protein operates within amino-acid biosynthesis; L-leucine biosynthesis; L-leucine from 3-methyl-2-oxobutanoate: step 2/4. In terms of biological role, catalyzes the isomerization between 2-isopropylmalate and 3-isopropylmalate, via the formation of 2-isopropylmaleate. In Oenococcus oeni (strain ATCC BAA-331 / PSU-1), this protein is 3-isopropylmalate dehydratase small subunit.